Consider the following 348-residue polypeptide: Uroporphyrinogen decarboxylase (348 aa).

Substrate contacts are provided by residues 27-31 (RQAGR), Phe46, Asp76, Tyr152, Ser207, and His320.

It belongs to the uroporphyrinogen decarboxylase family. As to quaternary structure, homodimer.

The protein localises to the cytoplasm. It carries out the reaction uroporphyrinogen III + 4 H(+) = coproporphyrinogen III + 4 CO2. It functions in the pathway porphyrin-containing compound metabolism; protoporphyrin-IX biosynthesis; coproporphyrinogen-III from 5-aminolevulinate: step 4/4. Catalyzes the decarboxylation of four acetate groups of uroporphyrinogen-III to yield coproporphyrinogen-III. The chain is Uroporphyrinogen decarboxylase from Bacillus cytotoxicus (strain DSM 22905 / CIP 110041 / 391-98 / NVH 391-98).